The following is a 162-amino-acid chain: uncharacterized protein (162 aa).

Residues 7–27 traverse the membrane as a helical segment; sequence LGGVMLFAIVSLMVCGCMVVF.

It localises to the membrane. This is an uncharacterized protein from Methanocaldococcus jannaschii (strain ATCC 43067 / DSM 2661 / JAL-1 / JCM 10045 / NBRC 100440) (Methanococcus jannaschii).